The primary structure comprises 205 residues: Outer-membrane lipoprotein carrier protein (205 aa).

The signal sequence occupies residues 1-19; it reads MKKIIICFIFVFSINISFA.

The protein belongs to the LolA family. As to quaternary structure, monomer.

It localises to the periplasm. Its function is as follows. Participates in the translocation of lipoproteins from the inner membrane to the outer membrane. Only forms a complex with a lipoprotein if the residue after the N-terminal Cys is not an aspartate (The Asp acts as a targeting signal to indicate that the lipoprotein should stay in the inner membrane). This chain is Outer-membrane lipoprotein carrier protein, found in Francisella tularensis subsp. novicida (strain U112).